Reading from the N-terminus, the 89-residue chain is Small ribosomal subunit protein uS15 (89 aa).

It belongs to the universal ribosomal protein uS15 family. As to quaternary structure, part of the 30S ribosomal subunit. Forms a bridge to the 50S subunit in the 70S ribosome, contacting the 23S rRNA.

In terms of biological role, one of the primary rRNA binding proteins, it binds directly to 16S rRNA where it helps nucleate assembly of the platform of the 30S subunit by binding and bridging several RNA helices of the 16S rRNA. Forms an intersubunit bridge (bridge B4) with the 23S rRNA of the 50S subunit in the ribosome. This chain is Small ribosomal subunit protein uS15, found in Mycobacterium avium (strain 104).